Here is a 508-residue protein sequence, read N- to C-terminus: Glycerol kinase (508 aa).

T15 is a binding site for ADP. The ATP site is built by T15, S16, and S17. Position 15 (T15) interacts with sn-glycerol 3-phosphate. R19 contributes to the ADP binding site. Sn-glycerol 3-phosphate is bound by residues R85, E86, Y138, and D251. Glycerol-binding residues include R85, E86, Y138, D251, and Q252. ADP contacts are provided by T273, G317, and G419. ATP is bound by residues T273, G317, and G419.

It belongs to the FGGY kinase family.

It carries out the reaction glycerol + ATP = sn-glycerol 3-phosphate + ADP + H(+). Its pathway is polyol metabolism; glycerol degradation via glycerol kinase pathway; sn-glycerol 3-phosphate from glycerol: step 1/1. Its activity is regulated as follows. Inhibited by fructose 1,6-bisphosphate (FBP). Functionally, key enzyme in the regulation of glycerol uptake and metabolism. Catalyzes the phosphorylation of glycerol to yield sn-glycerol 3-phosphate. The sequence is that of Glycerol kinase from Mycoplasma pneumoniae (strain ATCC 29342 / M129 / Subtype 1) (Mycoplasmoides pneumoniae).